The following is a 315-amino-acid chain: Ribosomal RNA small subunit methyltransferase H (315 aa).

S-adenosyl-L-methionine is bound by residues 32–34, aspartate 52, phenylalanine 78, aspartate 100, and glutamine 107; that span reads GGH.

This sequence belongs to the methyltransferase superfamily. RsmH family.

It localises to the cytoplasm. The catalysed reaction is cytidine(1402) in 16S rRNA + S-adenosyl-L-methionine = N(4)-methylcytidine(1402) in 16S rRNA + S-adenosyl-L-homocysteine + H(+). Functionally, specifically methylates the N4 position of cytidine in position 1402 (C1402) of 16S rRNA. The chain is Ribosomal RNA small subunit methyltransferase H from Psychromonas ingrahamii (strain DSM 17664 / CCUG 51855 / 37).